Consider the following 268-residue polypeptide: MERYESLFAQLKERKEGAFVPFVTLGDPGIEQSLKIIDTLIEAGADALELGIPFSDPLADGPTIQNATLRAFAAGVTPAQCFEMLALIRQKHPTIPIGLLMYANLVFNKGIDEFYAQCEKVGVDSVLVADVPIEESAPFRQAALRHNVAPIFICPPNADDDLLRQIASYGRGYTYLLSRAGVTGAENRAALPLNHLVAKLKEYNAAPPLQGFGISTPDQVKAAIDAGAAGAISGSAIVKIIEQHINEPEKMLAALKVFVQPMKVATRS.

Residues E49 and D60 each act as proton acceptor in the active site.

The protein belongs to the TrpA family. In terms of assembly, tetramer of two alpha and two beta chains.

The catalysed reaction is (1S,2R)-1-C-(indol-3-yl)glycerol 3-phosphate + L-serine = D-glyceraldehyde 3-phosphate + L-tryptophan + H2O. The protein operates within amino-acid biosynthesis; L-tryptophan biosynthesis; L-tryptophan from chorismate: step 5/5. Its function is as follows. The alpha subunit is responsible for the aldol cleavage of indoleglycerol phosphate to indole and glyceraldehyde 3-phosphate. This Shigella sonnei (strain Ss046) protein is Tryptophan synthase alpha chain.